A 1113-amino-acid chain; its full sequence is Myosin-binding protein 1 (1113 aa).

A helical membrane pass occupies residues 12–34 (LAFNEWLLMFMLFVNSIFSYVIA). The tract at residues 209-229 (ESEAVFSDTEPKQESSLNHLP) is disordered. Positions 888 to 986 (SEGDRLKRQV…DLEAEIEYFR (99 aa)) constitute a GTD-binding domain.

As to quaternary structure, interacts with myosin XI-K, XI-I and XI-1. In terms of tissue distribution, expressed in leaf epidermal cells, roots and root hairs.

It localises to the endomembrane system. Its function is as follows. Membrane-anchored myosin receptors that define a distinct, plant-specific transport vesicle compartment. In Arabidopsis thaliana (Mouse-ear cress), this protein is Myosin-binding protein 1.